Consider the following 962-residue polypeptide: Glycine dehydrogenase (decarboxylating) (962 aa).

Residue Lys709 is modified to N6-(pyridoxal phosphate)lysine.

The protein belongs to the GcvP family. The glycine cleavage system is composed of four proteins: P, T, L and H. The cofactor is pyridoxal 5'-phosphate.

It carries out the reaction N(6)-[(R)-lipoyl]-L-lysyl-[glycine-cleavage complex H protein] + glycine + H(+) = N(6)-[(R)-S(8)-aminomethyldihydrolipoyl]-L-lysyl-[glycine-cleavage complex H protein] + CO2. Functionally, the glycine cleavage system catalyzes the degradation of glycine. The P protein binds the alpha-amino group of glycine through its pyridoxal phosphate cofactor; CO(2) is released and the remaining methylamine moiety is then transferred to the lipoamide cofactor of the H protein. This chain is Glycine dehydrogenase (decarboxylating), found in Shewanella oneidensis (strain ATCC 700550 / JCM 31522 / CIP 106686 / LMG 19005 / NCIMB 14063 / MR-1).